A 226-amino-acid polypeptide reads, in one-letter code: Transcription repressor OFP12 (226 aa).

Over residues 68 to 87 (SSTFTASTSTAANSSSSSAS) the composition is skewed to low complexity. A disordered region spans residues 68–104 (SSTFTASTSTAANSSSSSASYDDSDNYGFAPDDDSPP). One can recognise an OVATE domain in the interval 152–217 (VKHYVQSPDP…IRAFADILVS (66 aa)).

As to quaternary structure, interacts with KNAT1, KNAT2, KNAT3 and KNAT4. Expressed in roots, shoots, stems, flower buds and siliques.

The protein localises to the nucleus. Its function is as follows. Transcriptional repressor that regulates multiple aspects of plant growth and development through the regulation of BEL1-LIKE (BLH) and KNOX TALE (KNAT) homeodomain transcription factors. The protein is Transcription repressor OFP12 (OFP12) of Arabidopsis thaliana (Mouse-ear cress).